We begin with the raw amino-acid sequence, 427 residues long: D-inositol 3-phosphate glycosyltransferase (427 aa).

Residue H12 participates in 1D-myo-inositol 3-phosphate binding. UDP-N-acetyl-alpha-D-glucosamine is bound by residues 18–19 and G26; that span reads QP. 1D-myo-inositol 3-phosphate contacts are provided by residues 23-28, K81, Y113, T137, and R157; that span reads DAGGMN. UDP-N-acetyl-alpha-D-glucosamine contacts are provided by R234, K239, and R297. Mg(2+) is bound by residues Y306, Q307, and A309. UDP-N-acetyl-alpha-D-glucosamine is bound by residues E319 and E327. Mg(2+) is bound at residue T333.

This sequence belongs to the glycosyltransferase group 1 family. MshA subfamily. As to quaternary structure, homodimer.

The enzyme catalyses 1D-myo-inositol 3-phosphate + UDP-N-acetyl-alpha-D-glucosamine = 1D-myo-inositol 2-acetamido-2-deoxy-alpha-D-glucopyranoside 3-phosphate + UDP + H(+). Functionally, catalyzes the transfer of a N-acetyl-glucosamine moiety to 1D-myo-inositol 3-phosphate to produce 1D-myo-inositol 2-acetamido-2-deoxy-glucopyranoside 3-phosphate in the mycothiol biosynthesis pathway. The protein is D-inositol 3-phosphate glycosyltransferase of Corynebacterium diphtheriae (strain ATCC 700971 / NCTC 13129 / Biotype gravis).